Reading from the N-terminus, the 272-residue chain is Phosphatidylglycerol--prolipoprotein diacylglyceryl transferase (272 aa).

A run of 4 helical transmembrane segments spans residues 16–36, 62–82, 97–117, and 129–149; these read VGLH…LSSF, FALG…VLFY, IWKG…WAAV, and LSVT…ALLI. Residue arginine 150 participates in a 1,2-diacyl-sn-glycero-3-phospho-(1'-sn-glycerol) binding. A run of 2 helical transmembrane segments spans residues 206 to 226 and 246 to 266; these read GVIR…VAVI and ILTI…GIIW.

It belongs to the Lgt family.

It is found in the cell inner membrane. The catalysed reaction is L-cysteinyl-[prolipoprotein] + a 1,2-diacyl-sn-glycero-3-phospho-(1'-sn-glycerol) = an S-1,2-diacyl-sn-glyceryl-L-cysteinyl-[prolipoprotein] + sn-glycerol 1-phosphate + H(+). It functions in the pathway protein modification; lipoprotein biosynthesis (diacylglyceryl transfer). In terms of biological role, catalyzes the transfer of the diacylglyceryl group from phosphatidylglycerol to the sulfhydryl group of the N-terminal cysteine of a prolipoprotein, the first step in the formation of mature lipoproteins. In Chlamydia trachomatis serovar D (strain ATCC VR-885 / DSM 19411 / UW-3/Cx), this protein is Phosphatidylglycerol--prolipoprotein diacylglyceryl transferase.